We begin with the raw amino-acid sequence, 287 residues long: Light-independent protochlorophyllide reductase iron-sulfur ATP-binding protein (287 aa).

Residues 10–15 (GVGKST) and lysine 39 each bind ATP. A Mg(2+)-binding site is contributed by serine 14. 2 residues coordinate [4Fe-4S] cluster: cysteine 95 and cysteine 129. ATP is bound at residue 181–182 (NR).

It belongs to the NifH/BchL/ChlL family. As to quaternary structure, homodimer. Protochlorophyllide reductase is composed of three subunits; BchL, BchN and BchB. It depends on [4Fe-4S] cluster as a cofactor.

The catalysed reaction is chlorophyllide a + oxidized 2[4Fe-4S]-[ferredoxin] + 2 ADP + 2 phosphate = protochlorophyllide a + reduced 2[4Fe-4S]-[ferredoxin] + 2 ATP + 2 H2O. It functions in the pathway porphyrin-containing compound metabolism; bacteriochlorophyll biosynthesis (light-independent). Component of the dark-operative protochlorophyllide reductase (DPOR) that uses Mg-ATP and reduced ferredoxin to reduce ring D of protochlorophyllide (Pchlide) to form chlorophyllide a (Chlide). This reaction is light-independent. The L component serves as a unique electron donor to the NB-component of the complex, and binds Mg-ATP. In Heliobacterium modesticaldum (strain ATCC 51547 / Ice1), this protein is Light-independent protochlorophyllide reductase iron-sulfur ATP-binding protein.